Consider the following 33-residue polypeptide: U1-pseudomyrmecitoxin-Pt1 subunit LS1 (33 aa).

Belongs to the myrmexin family. In terms of assembly, heterodimer composed of subunit LS1 and subunit SS1 (U1-PSDTX-Pt1b), heterodimer composed of subunit LS1 and SS2 (U1-PSDTX-Pt1b), and heterodimer composed of subunit LS1 and SS3; disulfide-linked. As to expression, expressed by the venom gland.

It localises to the secreted. This heterodimer may have anti-inflammatory properties, since the myrmexin complex (composed of 6 SS-LS heterodimers) inhibits carrageenin-induced edema in a dose-dependent manner (after subcutaneous injection into rats). This is U1-pseudomyrmecitoxin-Pt1 subunit LS1 from Pseudomyrmex triplarinus (Ant).